The chain runs to 497 residues: PHD finger protein 10 (497 aa).

Residues 1 to 13 (MTAAGPGAAPSPG) show a composition bias toward low complexity. The tract at residues 1–61 (MTAAGPGAAP…SSRSCETSSQ (61 aa)) is disordered. Phosphoserine occurs at positions 11, 35, and 49. Residues 88 to 184 (MLQEQVSEYL…HYKEYSQMQQ (97 aa)) form an essential to induce neural progenitor proliferation region. The segment at 88–294 (MLQEQVSEYL…PPLDPELPAL (207 aa)) is SAY. A Glycyl lysine isopeptide (Lys-Gly) (interchain with G-Cter in SUMO2) cross-link involves residue Lys-240. The residue at position 269 (Ser-269) is a Phosphoserine. Residues 284–295 (EPPLDPELPALD) show a composition bias toward low complexity. The segment at 284 to 368 (EPPLDPELPA…RSVLSKSAPG (85 aa)) is disordered. The tract at residues 291-333 (LPALDSDGDSDDGEDGGGDEKRKNKGTSDSSSGNVSEGDSPPD) is essential to induce neural progenitor proliferation. Phosphoserine is present on residues Ser-296, Ser-300, Ser-326, and Ser-330. A compositionally biased stretch (acidic residues) spans 296 to 307 (SDGDSDDGEDGG). Over residues 317–327 (TSDSSSGNVSE) the composition is skewed to polar residues. A compositionally biased stretch (basic and acidic residues) spans 337 to 358 (DTFHGRQKSKDKMATPRKDGSK). A PHD-type 1; degenerate zinc finger spans residues 378-435 (LCGICLKGKESNKKGKAESLIHCSQCDNSGHPSCLDMTMELVSMIKTYPWQCMECKTC). Residue Lys-384 forms a Glycyl lysine isopeptide (Lys-Gly) (interchain with G-Cter in SUMO2) linkage. A PHD-type 2; degenerate zinc finger spans residues 437-480 (ICGQPHHEEEMMFCDVCDRGYHTFCVGLGAIPSGRWICDCCQRA).

It belongs to the SAYP family. In terms of assembly, component of neural progenitors-specific chromatin remodeling complex (npBAF complex) composed of at least, ARID1A/BAF250A or ARID1B/BAF250B, SMARCD1/BAF60A, SMARCD3/BAF60C, SMARCA2/BRM/BAF190B, SMARCA4/BRG1/BAF190A, SMARCB1/BAF47, SMARCC1/BAF155, SMARCE1/BAF57, SMARCC2/BAF170, PHF10/BAF45A, ACTL6A/BAF53A and actin. Interacts with ACTL6A/BAF53A, SMARCA2/BRM/BAF190B, SMARCA4/BRG1/BAF190A and PBRM1/BAF180. In terms of tissue distribution, widely expressed. Expressed selectively in neural stem and progenitor cells (at protein level).

The protein resides in the nucleus. Involved in transcription activity regulation by chromatin remodeling. Belongs to the neural progenitors-specific chromatin remodeling complex (npBAF complex) and is required for the proliferation of neural progenitors. During neural development a switch from a stem/progenitor to a post-mitotic chromatin remodeling mechanism occurs as neurons exit the cell cycle and become committed to their adult state. The transition from proliferating neural stem/progenitor cells to post-mitotic neurons requires a switch in subunit composition of the npBAF and nBAF complexes. As neural progenitors exit mitosis and differentiate into neurons, npBAF complexes which contain ACTL6A/BAF53A and PHF10/BAF45A, are exchanged for homologous alternative ACTL6B/BAF53B and DPF1/BAF45B or DPF3/BAF45C subunits in neuron-specific complexes (nBAF). The npBAF complex is essential for the self-renewal/proliferative capacity of the multipotent neural stem cells. The nBAF complex along with CREST plays a role regulating the activity of genes essential for dendrite growth. The polypeptide is PHD finger protein 10 (Phf10) (Mus musculus (Mouse)).